A 348-amino-acid polypeptide reads, in one-letter code: tRNA N6-adenosine threonylcarbamoyltransferase (348 aa).

Fe cation-binding residues include His116 and His120. Substrate is bound by residues 138-142 (IISGG), Asp171, Gly184, and Asn282. Asp310 provides a ligand contact to Fe cation.

This sequence belongs to the KAE1 / TsaD family. Fe(2+) is required as a cofactor.

The protein resides in the cytoplasm. It catalyses the reaction L-threonylcarbamoyladenylate + adenosine(37) in tRNA = N(6)-L-threonylcarbamoyladenosine(37) in tRNA + AMP + H(+). Its function is as follows. Required for the formation of a threonylcarbamoyl group on adenosine at position 37 (t(6)A37) in tRNAs that read codons beginning with adenine. Is involved in the transfer of the threonylcarbamoyl moiety of threonylcarbamoyl-AMP (TC-AMP) to the N6 group of A37, together with TsaE and TsaB. TsaD likely plays a direct catalytic role in this reaction. This is tRNA N6-adenosine threonylcarbamoyltransferase from Ehrlichia ruminantium (strain Welgevonden).